A 184-amino-acid chain; its full sequence is Probable RNA 2'-phosphotransferase (184 aa).

The protein belongs to the KptA/TPT1 family.

Functionally, removes the 2'-phosphate from RNA via an intermediate in which the phosphate is ADP-ribosylated by NAD followed by a presumed transesterification to release the RNA and generate ADP-ribose 1''-2''-cyclic phosphate (APPR&gt;P). May function as an ADP-ribosylase. The sequence is that of Probable RNA 2'-phosphotransferase from Escherichia coli O139:H28 (strain E24377A / ETEC).